A 757-amino-acid chain; its full sequence is E3 ubiquitin-protein ligase RNF12-B (757 aa).

A compositionally biased stretch (polar residues) spans 1–10; it reads MESADSTGKG. 3 disordered regions span residues 1 to 29, 68 to 519, and 619 to 652; these read MESA…LDRE, LQQI…TYES, and EPAE…GGVT. Residues 11 to 21 are compositionally biased toward low complexity; sequence STEQSESQRQS. Composition is skewed to polar residues over residues 110–138 and 147–163; these read SVRQ…NPNS and INVN…SLDQ. A run of 21 repeats spans residues 197 to 202, 203 to 208, 209 to 214, 215 to 220, 221 to 226, 227 to 232, 237 to 242, 243 to 248, 249 to 254, 255 to 260, 261 to 266, 267 to 272, 273 to 278, 279 to 284, 285 to 290, 291 to 296, 297 to 302, 303 to 308, 309 to 314, 315 to 320, and 321 to 326. The segment at 197-326 is 21 X 6 AA approximate repeats of P-[EV]-S-V-[PA]-[EV]; sequence PESVDEPVSV…SVPVPESVPV (130 aa). Positions 202-237 are enriched in low complexity; sequence EPVSVAEPVSVAEPVSVAEPESVAEPESVAASVPVP. Over residues 245 to 313 the composition is skewed to acidic residues; sequence SVPEPESVPE…ESVPEPESIA (69 aa). A compositionally biased stretch (low complexity) spans 314–327; sequence EPESVPVPESVPVA. Over residues 352–367 the composition is skewed to basic and acidic residues; it reads RSPDQRRTRARTDRSR. Positions 383–392 are enriched in polar residues; it reads HSSSQTVDAS. The span at 408-424 shows a compositional bias: low complexity; the sequence is SSQVHSSSSNETEGSSR. Residues 428–452 show a composition bias toward polar residues; the sequence is HITARQQALGTEGQSQSTVHLSNPE. Over residues 453 to 466 the composition is skewed to low complexity; the sequence is SRSSSQTPQTDSPS. Over residues 467–476 the composition is skewed to polar residues; sequence NAETTGTGQR. Positions 490–500 are enriched in basic and acidic residues; that stretch reads RPGDYRQRDSI. The span at 501-517 shows a compositional bias: polar residues; that stretch reads ANRTRSRSQTPNNTVTY. Residues 703–744 form an RING-type; atypical zinc finger; that stretch reads CSVCITEYTEGNKLRKLPCSHEYHIHCIDRWLSENSTCPICR. A PDZ-binding motif is present at residues 754–757; it reads ESIV.

This sequence belongs to the RNF12 family. In terms of assembly, forms homodimers through the C-terminal region. The N-terminus interacts with the homeobox of LIM/homeobox factor lhx1/lim1, with lhx3/lim3 and lhx5/lim5, and with the N-terminus of ldb1. In terms of tissue distribution, shows overlapping expression with lhx1/lim1 and ldb1 in the gastrula mesoderm, and expression overlaps with ldb1 throughout early embryogenesis. After gastrulation, expression is gradually restricted to tissues originated from the ectoderm, the neuroectoderm, neural crest and epidermis, and subsequently to the neural tube as well as the head and tailbud region.

It is found in the nucleus. The enzyme catalyses S-ubiquitinyl-[E2 ubiquitin-conjugating enzyme]-L-cysteine + [acceptor protein]-L-lysine = [E2 ubiquitin-conjugating enzyme]-L-cysteine + N(6)-ubiquitinyl-[acceptor protein]-L-lysine.. Its pathway is protein modification; protein ubiquitination. Functionally, acts as an E3 ubiquitin-protein ligase specific for ldb1, mediating ubiquitination and proteasome-dependent degradation of excess ldb1 in a RING-dependent manner. Does not degrade ldb1 bound to lhx1/lim1, nor lim1 itself and thus contributes to the establishment of proper ldb1-lhx1/lim1 stoichiometry and the formation of a ldb1-lhx1/lim1 complex. Interferes with Spemann organizer function and suppresses secondary axis formation induced by ldb1 and lhx1/lim1. The polypeptide is E3 ubiquitin-protein ligase RNF12-B (rnf12-b) (Xenopus laevis (African clawed frog)).